A 332-amino-acid chain; its full sequence is D-alanine--D-alanine ligase (332 aa).

The region spanning 112-312 is the ATP-grasp domain; that stretch reads KRIWRADGLP…YPDLCLRILA (201 aa). 138-193 serves as a coordination point for ATP; sequence FQELGAPMIVKPSREGSTIGLTKVTSLGQCEQAYRLAAQHDPEVLCEQFIDGDETT. Positions 265, 279, and 281 each coordinate Mg(2+).

The protein belongs to the D-alanine--D-alanine ligase family. The cofactor is Mg(2+). Mn(2+) serves as cofactor.

The protein localises to the cytoplasm. It catalyses the reaction 2 D-alanine + ATP = D-alanyl-D-alanine + ADP + phosphate + H(+). The protein operates within cell wall biogenesis; peptidoglycan biosynthesis. Its function is as follows. Cell wall formation. This chain is D-alanine--D-alanine ligase, found in Acidovorax ebreus (strain TPSY) (Diaphorobacter sp. (strain TPSY)).